A 210-amino-acid chain; its full sequence is Selenoprotein T2 (210 aa).

A signal peptide spans M1–V21. Positions C62 to U65 form a cross-link, cysteinyl-selenocysteine (Cys-Sec). U65 is a non-standard amino acid (selenocysteine).

Belongs to the SelWTH family. Selenoprotein T subfamily. In terms of processing, may contain a selenide-sulfide bond between Cys-62 and Sec-65. This bond is speculated to serve as redox-active pair. In terms of tissue distribution, widely expressed in the embryo.

In Danio rerio (Zebrafish), this protein is Selenoprotein T2.